Consider the following 99-residue polypeptide: Ferredoxin, heterocyst (99 aa).

The 2Fe-2S ferredoxin-type domain occupies 4–96 (YQVRLINKKE…NCTIKTHQEP (93 aa)). Residues C42, C47, C50, and C80 each contribute to the [2Fe-2S] cluster site.

It belongs to the 2Fe2S plant-type ferredoxin family. It depends on [2Fe-2S] cluster as a cofactor.

Ferredoxins are iron-sulfur proteins that transfer electrons in a wide variety of metabolic reactions. This is Ferredoxin, heterocyst (fdxH) from Microchaete diplosiphon (Fremyella diplosiphon).